Reading from the N-terminus, the 314-residue chain is Transcription factor DICHOTOMA (314 aa).

In terms of domain architecture, TCP spans 87-145 (KKDRHSKINRPQGPRDRRVRLSIGIARKFFDLQEMLGFDKPSKTLDWLLTKSKEAIKEL). The region spanning 201–218 (KESRAKARARARERTKEK) is the R domain.

It is found in the nucleus. Functionally, transcription regulator involved in the dorsovental asymmetry of flowers. Promotes dorsal identity. In Antirrhinum majus (Garden snapdragon), this protein is Transcription factor DICHOTOMA (DICH).